A 304-amino-acid polypeptide reads, in one-letter code: Elongation factor Ts (304 aa).

The involved in Mg(2+) ion dislocation from EF-Tu stretch occupies residues 82-85 (TDFV).

It belongs to the EF-Ts family.

Its subcellular location is the cytoplasm. Its function is as follows. Associates with the EF-Tu.GDP complex and induces the exchange of GDP to GTP. It remains bound to the aminoacyl-tRNA.EF-Tu.GTP complex up to the GTP hydrolysis stage on the ribosome. The polypeptide is Elongation factor Ts (Symbiobacterium thermophilum (strain DSM 24528 / JCM 14929 / IAM 14863 / T)).